The sequence spans 160 residues: uncharacterized protein (160 aa).

This is an uncharacterized protein from Human cytomegalovirus (strain AD169) (HHV-5).